A 631-amino-acid chain; its full sequence is RNA polymerase sigma factor RpoD (631 aa).

The tract at residues 395–465 is sigma-70 factor domain-2; sequence LIKANLRLVV…TRSISDQART (71 aa). The short motif at 419-422 is the Interaction with polymerase core subunit RpoC element; the sequence is DLVQ. Positions 474–550 are sigma-70 factor domain-3; that stretch reads EQINRLNRET…DKAIKNPANH (77 aa). The segment at 563–616 is sigma-70 factor domain-4; it reads ILGTLPEREQEVVKMRFGLEDGYSLTLEEVGLHFNVTRERIRQIESKALRRLKN. Residues 589–608 constitute a DNA-binding region (H-T-H motif); the sequence is LEEVGLHFNVTRERIRQIES.

Belongs to the sigma-70 factor family. RpoD/SigA subfamily. In terms of assembly, interacts transiently with the RNA polymerase catalytic core.

Its subcellular location is the cytoplasm. Functionally, sigma factors are initiation factors that promote the attachment of RNA polymerase to specific initiation sites and are then released. This sigma factor is the primary sigma factor during exponential growth. The chain is RNA polymerase sigma factor RpoD from Borreliella burgdorferi (strain ATCC 35210 / DSM 4680 / CIP 102532 / B31) (Borrelia burgdorferi).